Here is a 229-residue protein sequence, read N- to C-terminus: Octanoyltransferase (229 aa).

One can recognise a BPL/LPL catalytic domain in the interval 45-220 (ATAVDELWVV…ELARQFCFVL (176 aa)). Substrate contacts are provided by residues 84–91 (RGGQVTYH), 151–153 (ALG), and 164–166 (GVA). The Acyl-thioester intermediate role is filled by Cys182.

Belongs to the LipB family.

Its subcellular location is the cytoplasm. The catalysed reaction is octanoyl-[ACP] + L-lysyl-[protein] = N(6)-octanoyl-L-lysyl-[protein] + holo-[ACP] + H(+). It participates in protein modification; protein lipoylation via endogenous pathway; protein N(6)-(lipoyl)lysine from octanoyl-[acyl-carrier-protein]: step 1/2. In terms of biological role, catalyzes the transfer of endogenously produced octanoic acid from octanoyl-acyl-carrier-protein onto the lipoyl domains of lipoate-dependent enzymes. Lipoyl-ACP can also act as a substrate although octanoyl-ACP is likely to be the physiological substrate. This Xylella fastidiosa (strain 9a5c) protein is Octanoyltransferase.